The following is a 494-amino-acid chain: Amidophosphoribosyltransferase (494 aa).

Residues 1–10 (MFNYSGLNEE) constitute a propeptide that is removed on maturation. The active-site Nucleophile is the C11. One can recognise a Glutamine amidotransferase type-2 domain in the interval 11–231 (CGVFGIWNHP…AGEYVVINDK (221 aa)). Residues S294, D356, and D357 each coordinate Mg(2+).

It in the C-terminal section; belongs to the purine/pyrimidine phosphoribosyltransferase family. Mg(2+) is required as a cofactor.

The enzyme catalyses 5-phospho-beta-D-ribosylamine + L-glutamate + diphosphate = 5-phospho-alpha-D-ribose 1-diphosphate + L-glutamine + H2O. It participates in purine metabolism; IMP biosynthesis via de novo pathway; N(1)-(5-phospho-D-ribosyl)glycinamide from 5-phospho-alpha-D-ribose 1-diphosphate: step 1/2. Its function is as follows. Catalyzes the formation of phosphoribosylamine from phosphoribosylpyrophosphate (PRPP) and glutamine. This Staphylococcus aureus (strain COL) protein is Amidophosphoribosyltransferase.